The chain runs to 84 residues: Cell division topological specificity factor (84 aa).

This sequence belongs to the MinE family.

In terms of biological role, prevents the cell division inhibition by proteins MinC and MinD at internal division sites while permitting inhibition at polar sites. This ensures cell division at the proper site by restricting the formation of a division septum at the midpoint of the long axis of the cell. This Paraburkholderia xenovorans (strain LB400) protein is Cell division topological specificity factor.